Here is a 137-residue protein sequence, read N- to C-terminus: Large ribosomal subunit protein uL16 (137 aa).

This sequence belongs to the universal ribosomal protein uL16 family. As to quaternary structure, part of the 50S ribosomal subunit.

In terms of biological role, binds 23S rRNA and is also seen to make contacts with the A and possibly P site tRNAs. This Bartonella henselae (strain ATCC 49882 / DSM 28221 / CCUG 30454 / Houston 1) (Rochalimaea henselae) protein is Large ribosomal subunit protein uL16.